A 147-amino-acid chain; its full sequence is Ribonuclease H (147 aa).

Positions 1 to 142 (MREVIIYTDG…CDELARAAIA (142 aa)) constitute an RNase H type-1 domain. The Mg(2+) site is built by aspartate 9, glutamate 47, aspartate 69, and aspartate 134.

This sequence belongs to the RNase H family. In terms of assembly, monomer. Mg(2+) serves as cofactor.

It localises to the cytoplasm. It catalyses the reaction Endonucleolytic cleavage to 5'-phosphomonoester.. In terms of biological role, endonuclease that specifically degrades the RNA of RNA-DNA hybrids. The protein is Ribonuclease H of Symbiobacterium thermophilum (strain DSM 24528 / JCM 14929 / IAM 14863 / T).